A 447-amino-acid polypeptide reads, in one-letter code: UDP-N-acetylmuramate--L-alanine ligase (447 aa).

115–121 serves as a coordination point for ATP; that stretch reads GAHGKTS.

Belongs to the MurCDEF family.

It is found in the cytoplasm. The catalysed reaction is UDP-N-acetyl-alpha-D-muramate + L-alanine + ATP = UDP-N-acetyl-alpha-D-muramoyl-L-alanine + ADP + phosphate + H(+). It functions in the pathway cell wall biogenesis; peptidoglycan biosynthesis. In terms of biological role, cell wall formation. In Streptococcus thermophilus (strain CNRZ 1066), this protein is UDP-N-acetylmuramate--L-alanine ligase.